Consider the following 196-residue polypeptide: Carnitine operon protein CaiE (196 aa).

Residues 173 to 196 (TQPLRQMEENRPRLQGTTDVTPKR) are disordered. Polar residues predominate over residues 187 to 196 (QGTTDVTPKR).

This sequence belongs to the transferase hexapeptide repeat family.

It functions in the pathway amine and polyamine metabolism; carnitine metabolism. Its function is as follows. Overproduction of CaiE stimulates the activity of CaiB and CaiD. In Shigella flexneri serotype 5b (strain 8401), this protein is Carnitine operon protein CaiE.